The following is a 469-amino-acid chain: Putative dipeptidase SE_1424 (469 aa).

Histidine 84 serves as a coordination point for Zn(2+). Aspartate 86 is an active-site residue. A Zn(2+)-binding site is contributed by aspartate 115. Catalysis depends on glutamate 149, which acts as the Proton acceptor. Zn(2+) is bound by residues glutamate 150, aspartate 173, and histidine 440.

It belongs to the peptidase M20A family. Zn(2+) serves as cofactor.

In Staphylococcus epidermidis (strain ATCC 12228 / FDA PCI 1200), this protein is Putative dipeptidase SE_1424.